Here is a 179-residue protein sequence, read N- to C-terminus: Large ribosomal subunit protein uL6 (179 aa).

It belongs to the universal ribosomal protein uL6 family. As to quaternary structure, part of the 50S ribosomal subunit.

This protein binds to the 23S rRNA, and is important in its secondary structure. It is located near the subunit interface in the base of the L7/L12 stalk, and near the tRNA binding site of the peptidyltransferase center. This chain is Large ribosomal subunit protein uL6, found in Prochlorococcus marinus (strain MIT 9312).